The chain runs to 630 residues: Biosynthetic arginine decarboxylase (630 aa).

Lys-99 carries the N6-(pyridoxal phosphate)lysine modification. 281-291 (VDIGGGLGVDY) lines the substrate pocket.

The protein belongs to the Orn/Lys/Arg decarboxylase class-II family. SpeA subfamily. Requires Mg(2+) as cofactor. The cofactor is pyridoxal 5'-phosphate.

It carries out the reaction L-arginine + H(+) = agmatine + CO2. It functions in the pathway amine and polyamine biosynthesis; agmatine biosynthesis; agmatine from L-arginine: step 1/1. Catalyzes the biosynthesis of agmatine from arginine. This chain is Biosynthetic arginine decarboxylase, found in Phocaeicola vulgatus (strain ATCC 8482 / DSM 1447 / JCM 5826 / CCUG 4940 / NBRC 14291 / NCTC 11154) (Bacteroides vulgatus).